A 210-amino-acid polypeptide reads, in one-letter code: Orotate phosphoribosyltransferase (210 aa).

5-phospho-alpha-D-ribose 1-diphosphate contacts are provided by residues Arg97, Lys101, His103, and Glu123–Ser131. Ser127 contributes to the orotate binding site.

This sequence belongs to the purine/pyrimidine phosphoribosyltransferase family. PyrE subfamily. In terms of assembly, homodimer. The cofactor is Mg(2+).

The catalysed reaction is orotidine 5'-phosphate + diphosphate = orotate + 5-phospho-alpha-D-ribose 1-diphosphate. It participates in pyrimidine metabolism; UMP biosynthesis via de novo pathway; UMP from orotate: step 1/2. Its function is as follows. Catalyzes the transfer of a ribosyl phosphate group from 5-phosphoribose 1-diphosphate to orotate, leading to the formation of orotidine monophosphate (OMP). This is Orotate phosphoribosyltransferase from Porphyromonas gingivalis (strain ATCC BAA-308 / W83).